The following is a 369-amino-acid chain: tRNA 2-selenouridine synthase (369 aa).

Residues 15 to 138 (FIAGQPLIDL…MRQYLIGVIE (124 aa)) form the Rhodanese domain. The active-site S-selanylcysteine intermediate is Cys-98.

Belongs to the SelU family. In terms of assembly, monomer.

The catalysed reaction is 5-methylaminomethyl-2-thiouridine(34) in tRNA + selenophosphate + (2E)-geranyl diphosphate + H2O + H(+) = 5-methylaminomethyl-2-selenouridine(34) in tRNA + (2E)-thiogeraniol + phosphate + diphosphate. It carries out the reaction 5-methylaminomethyl-2-thiouridine(34) in tRNA + (2E)-geranyl diphosphate = 5-methylaminomethyl-S-(2E)-geranyl-thiouridine(34) in tRNA + diphosphate. The enzyme catalyses 5-methylaminomethyl-S-(2E)-geranyl-thiouridine(34) in tRNA + selenophosphate + H(+) = 5-methylaminomethyl-2-(Se-phospho)selenouridine(34) in tRNA + (2E)-thiogeraniol. It catalyses the reaction 5-methylaminomethyl-2-(Se-phospho)selenouridine(34) in tRNA + H2O = 5-methylaminomethyl-2-selenouridine(34) in tRNA + phosphate. Involved in the post-transcriptional modification of the uridine at the wobble position (U34) of tRNA(Lys), tRNA(Glu) and tRNA(Gln). Catalyzes the conversion of 2-thiouridine (S2U-RNA) to 2-selenouridine (Se2U-RNA). Acts in a two-step process involving geranylation of 2-thiouridine (S2U) to S-geranyl-2-thiouridine (geS2U) and subsequent selenation of the latter derivative to 2-selenouridine (Se2U) in the tRNA chain. This chain is tRNA 2-selenouridine synthase, found in Shewanella sp. (strain MR-7).